Here is a 203-residue protein sequence, read N- to C-terminus: uncharacterized protein (203 aa).

The chain crosses the membrane as a helical span at residues 171–191 (VGYLSIWLKEYWYLVVLFVLI).

It is found in the membrane. This is an uncharacterized protein from Methanocaldococcus jannaschii (strain ATCC 43067 / DSM 2661 / JAL-1 / JCM 10045 / NBRC 100440) (Methanococcus jannaschii).